A 172-amino-acid chain; its full sequence is Adenine phosphoribosyltransferase (172 aa).

This sequence belongs to the purine/pyrimidine phosphoribosyltransferase family. Homodimer.

The protein localises to the cytoplasm. It carries out the reaction AMP + diphosphate = 5-phospho-alpha-D-ribose 1-diphosphate + adenine. The protein operates within purine metabolism; AMP biosynthesis via salvage pathway; AMP from adenine: step 1/1. Functionally, catalyzes a salvage reaction resulting in the formation of AMP, that is energically less costly than de novo synthesis. The chain is Adenine phosphoribosyltransferase from Pelobacter propionicus (strain DSM 2379 / NBRC 103807 / OttBd1).